The primary structure comprises 413 residues: uncharacterized protein (413 aa).

Disordered stretches follow at residues 108–158 and 232–257; these read ESVP…SKIS and DRLGAESKADTTTGTKPTGVFSRLGA. A Phosphoserine modification is found at Ser-115. Over residues 127–139 the composition is skewed to polar residues; it reads SAASRMIANSLNH. A Phosphoserine modification is found at Ser-141. A Glycyl lysine isopeptide (Lys-Gly) (interchain with G-Cter in SUMO2) cross-link involves residue Lys-239. Residues Ser-269 and Ser-296 each carry the phosphoserine modification. The tract at residues 290 to 336 is disordered; that stretch reads RGPTKASAQPALTVKAKAASSATSTATTPKLRRLALPSRPGLQKKPD. The segment covering 302-318 has biased composition (low complexity); that stretch reads TVKAKAASSATSTATTP. The residue at position 342 (Ser-342) is a Phosphoserine.

This is an uncharacterized protein from Mus musculus (Mouse).